An 854-amino-acid chain; its full sequence is Rod cGMP-specific 3',5'-cyclic phosphodiesterase subunit beta (854 aa).

Ser2 bears the N-acetylserine mark. 2 GAF domains span residues 71-220 (NMER…TLYL) and 252-429 (DIER…GWSV). One can recognise a PDEase domain in the interval 481–814 (DEDELGEILK…KEWKALADEY (334 aa)). Residue His557 is the Proton donor of the active site. Residues His561, His597, Asp598, and Asp718 each contribute to the a divalent metal cation site. Residue Cys851 is the site of S-geranylgeranyl cysteine attachment. Residues 852–854 (CIL) constitute a propeptide, removed in mature form.

This sequence belongs to the cyclic nucleotide phosphodiesterase family. In terms of assembly, oligomer composed of two catalytic chains (alpha and beta), an inhibitory chain (gamma) and the delta chain. A divalent metal cation is required as a cofactor.

It is found in the membrane. It localises to the cell projection. Its subcellular location is the cilium. The protein localises to the photoreceptor outer segment. The catalysed reaction is 3',5'-cyclic GMP + H2O = GMP + H(+). Functionally, rod-specific cGMP phosphodiesterase that catalyzes the hydrolysis of 3',5'-cyclic GMP. Necessary for the formation of a functional phosphodiesterase holoenzyme. Involved in retinal circadian rhythm photoentrainment via modulation of UVA and orange light-induced phase-shift of the retina clock. May participate in processes of transmission and amplification of the visual signal. In Homo sapiens (Human), this protein is Rod cGMP-specific 3',5'-cyclic phosphodiesterase subunit beta.